The sequence spans 309 residues: Taste receptor type 2 member 8 (309 aa).

Residues 1 to 7 (MFSPADN) are Extracellular-facing. The helical transmembrane segment at 8–28 (IFIILITGEFILGILGNGYIA) threads the bilayer. Residues 29–50 (LVNWIDWIKKKKISTVDYILTN) are Cytoplasmic-facing. Residues 51 to 71 (LVIARICLISVMVVNGIVIVL) form a helical membrane-spanning segment. The Extracellular portion of the chain corresponds to 72-82 (NPDVYTKNKQQ). A helical transmembrane segment spans residues 83-103 (IVIFTFWTFANYLNMWITTCL). Residues 104 to 131 (NVFYFLKIASSSHPLFLWLKWKIDMVVH) lie on the Cytoplasmic side of the membrane. The chain crosses the membrane as a helical span at residues 132 to 152 (WILLGCFAISLLVSLIAAIVL). Over 153–184 (SCDYRFHAIAKHKRNITEMFHVSKXPYFEPLT) the chain is Extracellular. Residue N167 is glycosylated (N-linked (GlcNAc...) asparagine). A helical membrane pass occupies residues 185 to 205 (LFNLFAIVPFIVSLISFFLLV). Topologically, residues 206-239 (RSLWRHTKQIKLYATGSRDPSTEVHVRAIKTMTS) are cytoplasmic. The chain crosses the membrane as a helical span at residues 240–260 (FIFFFFLYFISSILMTFSYLM). At 261 to 266 (TKYKLA) the chain is on the extracellular side. A helical transmembrane segment spans residues 267–287 (VEFGEIAAILYPLGHSLILIV). The Cytoplasmic segment spans residues 288 to 309 (LNNKLRQIFVRMLTCRKIACVI).

The protein belongs to the G-protein coupled receptor T2R family.

The protein localises to the membrane. Functionally, receptor that may play a role in the perception of bitterness and is gustducin-linked. May play a role in sensing the chemical composition of the gastrointestinal content. The activity of this receptor may stimulate alpha gustducin, mediate PLC-beta-2 activation and lead to the gating of TRPM5. This Pan paniscus (Pygmy chimpanzee) protein is Taste receptor type 2 member 8 (TAS2R8).